The chain runs to 572 residues: Asparagine--tRNA ligase, cytoplasmic 1 (572 aa).

An N-acetylalanine modification is found at A2. The segment at residues 53–131 (VRIGGWVKSG…QQIELNVVKV (79 aa)) is a DNA-binding region (OB). Residues 236–292 (DVEAARLIVIERGNVVAELKAAKASKEAITAAVAELKIAKETFAHIDERSRLRPGLP) form the WHEP-TRS domain.

The protein belongs to the class-II aminoacyl-tRNA synthetase family.

It is found in the cytoplasm. The protein localises to the cytosol. The catalysed reaction is tRNA(Asn) + L-asparagine + ATP = L-asparaginyl-tRNA(Asn) + AMP + diphosphate + H(+). The polypeptide is Asparagine--tRNA ligase, cytoplasmic 1 (Arabidopsis thaliana (Mouse-ear cress)).